Reading from the N-terminus, the 1972-residue chain is Myosin-11 (1972 aa).

3 positions are modified to phosphoserine: serine 8, serine 23, and serine 40. The region spanning 31–81 (AAKRLVWVPSEKQGFEAASIKEEKGDEVVVELVENGKKVTVGKDDIQKMNP) is the Myosin N-terminal SH3-like domain. Residues 85-783 (SKVEDMAELT…VLAHLEEERD (699 aa)) form the Myosin motor domain. Lysine 129 carries the post-translational modification N6,N6,N6-trimethyllysine. 178–185 (GESGAGKT) is a binding site for ATP. Actin-binding stretches follow at residues 661 to 683 (LGKL…IPNH) and 762 to 776 (RIGQ…GVLA). An IQ domain is found at 786–815 (ITDVIMAFQAMCRGYLARKAFAKRQQQLTA). Positions 844–1934 (LLQVTRQEEE…KSKLRRGNET (1091 aa)) form a coiled coil. Positions 858–882 (EDELQKTKERQQKAENELKELEQKH) are disordered. A Phosphothreonine modification is found at threonine 1177. A phosphoserine mark is found at serine 1684 and serine 1722. 2 disordered regions span residues 1744–1800 (ELEE…LRSK) and 1866–1972 (EQYK…KASE). The segment covering 1762-1788 (ATQQAEQLSNELATERSTAQKNESARQ) has biased composition (polar residues). Basic and acidic residues-rich tracts occupy residues 1789–1800 (QLERQNKELRSK) and 1866–1876 (EQYKEQAEKGN). The segment at 1935–1972 (SFVPSRRSGGRRVIENADGSEEETDTRDADFNGTKASE) is C-terminal. Serine 1954 is modified (phosphoserine). The residue at position 1958 (threonine 1958) is a Phosphothreonine. A Phosphoserine modification is found at serine 1971.

Belongs to the TRAFAC class myosin-kinesin ATPase superfamily. Myosin family. As to quaternary structure, muscle myosin is a hexameric protein that consists of 2 heavy chain subunits (MHC), 2 alkali light chain subunits (MLC) and 2 regulatory light chain subunits (MLC-2). In terms of tissue distribution, smooth muscle; expressed in the umbilical artery, bladder, esophagus and trachea. Isoform 1 is mostly found in slowly contracting tonic muscles.

Its subcellular location is the melanosome. Its function is as follows. Muscle contraction. This chain is Myosin-11 (MYH11), found in Homo sapiens (Human).